Here is a 670-residue protein sequence, read N- to C-terminus: tRNA 5-methylaminomethyl-2-thiouridine biosynthesis bifunctional protein MnmC (670 aa).

The tract at residues 1-242 (MTFSVQHAEI…KRECLSGLKI (242 aa)) is tRNA (mnm(5)s(2)U34)-methyltransferase. Residues 269 to 670 (IGGGIASLCA…KKWLKGSKVE (402 aa)) are FAD-dependent cmnm(5)s(2)U34 oxidoreductase.

The protein in the N-terminal section; belongs to the methyltransferase superfamily. tRNA (mnm(5)s(2)U34)-methyltransferase family. It in the C-terminal section; belongs to the DAO family. It depends on FAD as a cofactor.

It localises to the cytoplasm. The catalysed reaction is 5-aminomethyl-2-thiouridine(34) in tRNA + S-adenosyl-L-methionine = 5-methylaminomethyl-2-thiouridine(34) in tRNA + S-adenosyl-L-homocysteine + H(+). Functionally, catalyzes the last two steps in the biosynthesis of 5-methylaminomethyl-2-thiouridine (mnm(5)s(2)U) at the wobble position (U34) in tRNA. Catalyzes the FAD-dependent demodification of cmnm(5)s(2)U34 to nm(5)s(2)U34, followed by the transfer of a methyl group from S-adenosyl-L-methionine to nm(5)s(2)U34, to form mnm(5)s(2)U34. This Haemophilus influenzae (strain ATCC 51907 / DSM 11121 / KW20 / Rd) protein is tRNA 5-methylaminomethyl-2-thiouridine biosynthesis bifunctional protein MnmC.